The sequence spans 1187 residues: ATP-dependent DNA helicase MPH1 (1187 aa).

Residues Ile-144–Lys-311 enclose the Helicase ATP-binding domain. Leu-157–Thr-164 contributes to the ATP binding site. The DEAH box motif lies at Asp-259–His-262. Positions Glu-486 to Met-681 constitute a Helicase C-terminal domain. Disordered stretches follow at residues Val-542–Met-576, Asp-781–Val-848, and Pro-941–Lys-1003. Residues Lys-547–Lys-556 show a composition bias toward basic residues. Positions Thr-564–Met-576 are enriched in polar residues. Residues Asp-781 to Thr-817 are compositionally biased toward basic and acidic residues. Residues Thr-822–Val-848 are compositionally biased toward polar residues. Residues Ser-967 to Thr-977 show a composition bias toward low complexity. Basic and acidic residues predominate over residues Ser-980–Val-989.

Belongs to the DEAD box helicase family. DEAH subfamily. FANCM sub-subfamily. In terms of assembly, interacts with the MHF histone-fold complex to form the FANCM-MHF complex.

The protein localises to the nucleus. It carries out the reaction ATP + H2O = ADP + phosphate + H(+). Functionally, ATP-dependent DNA helicase involved in DNA damage repair by homologous recombination and in genome maintenance. Capable of unwinding D-loops. Plays a role in limiting crossover recombinants during mitotic DNA double-strand break (DSB) repair. Component of a FANCM-MHF complex which promotes gene conversion at blocked replication forks, probably by reversal of the stalled fork. This Candida albicans (strain SC5314 / ATCC MYA-2876) (Yeast) protein is ATP-dependent DNA helicase MPH1.